Here is a 686-residue protein sequence, read N- to C-terminus: Heat shock 70 kDa protein 12B (686 aa).

The interval 12–53 (LYIGSSPERSPVPSPPGSPRTQESCGIAPLTPSQSPKPEVRA) is disordered. 2 positions are modified to phosphoserine: serine 25 and serine 29. Phosphothreonine is present on threonine 42. Phosphoserine occurs at positions 44, 46, and 276.

Belongs to the heat shock protein 70 family. Highest expression in muscle and heart. Lower levels in liver and kidney.

The protein is Heat shock 70 kDa protein 12B (HSPA12B) of Homo sapiens (Human).